The sequence spans 158 residues: Phosphopantetheine adenylyltransferase (158 aa).

The protein belongs to the eukaryotic CoaD family.

Its subcellular location is the cytoplasm. The enzyme catalyses (R)-4'-phosphopantetheine + ATP + H(+) = 3'-dephospho-CoA + diphosphate. It functions in the pathway cofactor biosynthesis; coenzyme A biosynthesis. Reversibly transfers an adenylyl group from ATP to 4'-phosphopantetheine, yielding dephospho-CoA (dPCoA) and pyrophosphate. The polypeptide is Phosphopantetheine adenylyltransferase (Pyrococcus horikoshii (strain ATCC 700860 / DSM 12428 / JCM 9974 / NBRC 100139 / OT-3)).